Here is a 156-residue protein sequence, read N- to C-terminus: ATP synthase subunit b (156 aa).

A helical membrane pass occupies residues 7–27 (LIAQFVVFFILAGFTMKFVWP).

This sequence belongs to the ATPase B chain family. As to quaternary structure, F-type ATPases have 2 components, F(1) - the catalytic core - and F(0) - the membrane proton channel. F(1) has five subunits: alpha(3), beta(3), gamma(1), delta(1), epsilon(1). F(0) has three main subunits: a(1), b(2) and c(10-14). The alpha and beta chains form an alternating ring which encloses part of the gamma chain. F(1) is attached to F(0) by a central stalk formed by the gamma and epsilon chains, while a peripheral stalk is formed by the delta and b chains.

It localises to the cell inner membrane. Functionally, f(1)F(0) ATP synthase produces ATP from ADP in the presence of a proton or sodium gradient. F-type ATPases consist of two structural domains, F(1) containing the extramembraneous catalytic core and F(0) containing the membrane proton channel, linked together by a central stalk and a peripheral stalk. During catalysis, ATP synthesis in the catalytic domain of F(1) is coupled via a rotary mechanism of the central stalk subunits to proton translocation. Its function is as follows. Component of the F(0) channel, it forms part of the peripheral stalk, linking F(1) to F(0). The polypeptide is ATP synthase subunit b (Herminiimonas arsenicoxydans).